The primary structure comprises 63 residues: Cecropin-A1 (63 aa).

The first 23 residues, 1-23, serve as a signal peptide directing secretion; that stretch reads MKFYNIFVFVALILAITIGQSEA. Position 62 is an arginine amide (Arg62).

Belongs to the cecropin family.

It is found in the secreted. Functionally, cecropins have lytic and antibacterial activity against several Gram-positive and Gram-negative bacteria. This is Cecropin-A1 (CecA1) from Drosophila mauritiana (Fruit fly).